A 507-amino-acid polypeptide reads, in one-letter code: uncharacterized protein (507 aa).

Transmembrane regions (helical) follow at residues 11 to 31 (ILCF…IFPI), 97 to 117 (AWIA…YGHL), 125 to 145 (PVSF…GFAP), 149 to 169 (VFAV…IVFY), 187 to 207 (FFNW…CGYW), 209 to 229 (SAAI…LWLP), 283 to 303 (LFSS…WFST), 326 to 346 (FVQA…DLFI), 354 to 374 (LHQV…ALMI), 388 to 408 (LAII…WDAC), 423 to 443 (IGIG…PQMA), and 452 to 472 (IPYI…CFFL).

The protein belongs to the major facilitator superfamily.

The protein localises to the membrane. This is an uncharacterized protein from Caenorhabditis elegans.